Reading from the N-terminus, the 444-residue chain is Spermidine/putrescine import ATP-binding protein PotA (444 aa).

In terms of domain architecture, ABC transporter spans 11–332 (ISLVDVDKEF…PVNKWVANFI (322 aa)). 43 to 50 (GPSGSGKT) provides a ligand contact to ATP. Residues 111–201 (RIKKKAEEIP…ESFKKKYLTR (91 aa)) form an insert region.

It belongs to the ABC transporter superfamily. Spermidine/putrescine importer (TC 3.A.1.11.1) family. As to quaternary structure, the complex is composed of two ATP-binding proteins (PotA), two transmembrane proteins (PotB and PotC) and a solute-binding protein (PotD).

It localises to the cell membrane. It catalyses the reaction ATP + H2O + polyamine-[polyamine-binding protein]Side 1 = ADP + phosphate + polyamineSide 2 + [polyamine-binding protein]Side 1.. Functionally, part of the ABC transporter complex PotABCD involved in spermidine/putrescine import. Responsible for energy coupling to the transport system. This is Spermidine/putrescine import ATP-binding protein PotA from Mesomycoplasma hyopneumoniae (strain J / ATCC 25934 / NCTC 10110) (Mycoplasma hyopneumoniae).